The following is a 194-amino-acid chain: ATP-dependent Clp protease proteolytic subunit (194 aa).

Serine 97 acts as the Nucleophile in catalysis. The active site involves histidine 122.

This sequence belongs to the peptidase S14 family. In terms of assembly, fourteen ClpP subunits assemble into 2 heptameric rings which stack back to back to give a disk-like structure with a central cavity, resembling the structure of eukaryotic proteasomes.

The protein resides in the cytoplasm. The enzyme catalyses Hydrolysis of proteins to small peptides in the presence of ATP and magnesium. alpha-casein is the usual test substrate. In the absence of ATP, only oligopeptides shorter than five residues are hydrolyzed (such as succinyl-Leu-Tyr-|-NHMec, and Leu-Tyr-Leu-|-Tyr-Trp, in which cleavage of the -Tyr-|-Leu- and -Tyr-|-Trp bonds also occurs).. In terms of biological role, cleaves peptides in various proteins in a process that requires ATP hydrolysis. Has a chymotrypsin-like activity. Plays a major role in the degradation of misfolded proteins. The polypeptide is ATP-dependent Clp protease proteolytic subunit (Campylobacter jejuni subsp. jejuni serotype O:6 (strain 81116 / NCTC 11828)).